The chain runs to 99 residues: Signal recognition particle 19 kDa protein (99 aa).

This sequence belongs to the SRP19 family. In terms of assembly, part of the signal recognition particle protein translocation system, which is composed of SRP and FtsY. Archaeal SRP consists of a 7S RNA molecule of 300 nucleotides and two protein subunits: SRP54 and SRP19.

The protein resides in the cytoplasm. Involved in targeting and insertion of nascent membrane proteins into the cytoplasmic membrane. Binds directly to 7S RNA and mediates binding of the 54 kDa subunit of the SRP. This chain is Signal recognition particle 19 kDa protein, found in Pyrococcus horikoshii (strain ATCC 700860 / DSM 12428 / JCM 9974 / NBRC 100139 / OT-3).